Here is a 547-residue protein sequence, read N- to C-terminus: Sterol carrier protein 2 (547 aa).

S3 bears the Phosphoserine mark. At K132 the chain carries N6-acetyllysine; alternate. An N6-succinyllysine; alternate modification is found at K132. K168 carries the N6-succinyllysine modification. K173 and K177 each carry N6-acetyllysine. Residue K183 is modified to N6-acetyllysine; alternate. N6-succinyllysine; alternate is present on K183. N6-succinyllysine is present on K282. 5 positions are modified to N6-acetyllysine; alternate: K341, K432, K438, K443, and K453. An N6-succinyllysine; alternate mark is found at K341, K432, K438, K443, and K453. The SCP2 domain occupies 433–543 (ANLVFKEIEK…KLQNLQLQPG (111 aa)). An N6-succinyllysine modification is found at K464. Residue K470 is modified to N6-acetyllysine; alternate. Position 470 is an N6-succinyllysine; alternate (K470). K479 bears the N6-succinyllysine mark. Residue K491 is modified to N6-acetyllysine. N6-succinyllysine occurs at positions 492 and 511. Position 516 is a phosphoserine (S516). K522 and K534 each carry N6-succinyllysine. Residues 545-547 (AKL) carry the Microbody targeting signal motif.

It in the N-terminal section; belongs to the thiolase-like superfamily. Thiolase family. As to quaternary structure, interacts with PEX5; the interaction is essential for peroxisomal import. In terms of processing, preSCP2, a protein with a molecular mass of about 15 kDa, is processed into its mature form (SCP2) by proteolytic cleavage of a 20 residue leader sequence after translocation into peroxisomes. As to expression, liver, fibroblasts, and placenta.

It localises to the peroxisome. The protein resides in the cytoplasm. It is found in the mitochondrion. Its subcellular location is the endoplasmic reticulum. The catalysed reaction is choloyl-CoA + propanoyl-CoA = 3alpha,7alpha,12alpha-trihydroxy-24-oxo-5beta-cholestan-26-oyl-CoA + CoA. It catalyses the reaction 4,8,12-trimethyltridecanoyl-CoA + propanoyl-CoA = 3-oxopristanoyl-CoA + CoA. It carries out the reaction an acyl-CoA + acetyl-CoA = a 3-oxoacyl-CoA + CoA. The enzyme catalyses hexanoyl-CoA + acetyl-CoA = 3-oxooctanoyl-CoA + CoA. The catalysed reaction is tetradecanoyl-CoA + acetyl-CoA = 3-oxohexadecanoyl-CoA + CoA. It catalyses the reaction 3-oxohexadecanedioyl-CoA + CoA = tetradecanedioyl-CoA + acetyl-CoA. It carries out the reaction propanoyl-CoA + tetradecanoyl-CoA = 3-oxo-2-methylhexadecanoyl-CoA + CoA. The enzyme catalyses butanoyl-CoA + acetyl-CoA = 3-oxohexanoyl-CoA + CoA. The catalysed reaction is octanoyl-CoA + acetyl-CoA = 3-oxodecanoyl-CoA + CoA. It catalyses the reaction decanoyl-CoA + acetyl-CoA = 3-oxododecanoyl-CoA + CoA. It carries out the reaction dodecanoyl-CoA + acetyl-CoA = 3-oxotetradecanoyl-CoA + CoA. The enzyme catalyses hexadecanoyl-CoA + acetyl-CoA = 3-oxooctadecanoyl-CoA + CoA. The catalysed reaction is 3-oxo-(9Z-octadecenoyl)-CoA + CoA = (7Z)-hexadecenoyl-CoA + acetyl-CoA. It catalyses the reaction 7-dehydrocholesterol(in) = 7-dehydrocholesterol(out). Functionally, plays a crucial role in the peroxisomal oxidation of branched-chain fatty acids. Catalyzes the last step of the peroxisomal beta-oxidation of branched chain fatty acids and the side chain of the bile acid intermediates di- and trihydroxycoprostanic acids (DHCA and THCA). Also active with medium and long straight chain 3-oxoacyl-CoAs. Stimulates the microsomal conversion of 7-dehydrocholesterol to cholesterol and transfers phosphatidylcholine and 7-dehydrocholesterol between membrances, in vitro. Isoforms SCP2 and SCPx cooperate in peroxisomal oxidation of certain naturally occurring tetramethyl-branched fatty acyl-CoAs. Mediates the transfer of all common phospholipids, cholesterol and gangliosides from the endoplasmic reticulum to the plasma membrane. May play a role in regulating steroidogenesis. Stimulates the microsomal conversion of 7-dehydrocholesterol to cholesterol. Also binds fatty acids and fatty acyl Coenzyme A (CoA) such as phytanoyl-CoA. Involved in the regulation phospholipid synthesis in endoplasmic reticulum enhancing the incorporation of exogenous fatty acid into glycerides. Seems to stimulate the rate-limiting step in phosphatidic acid formation mediated by GPAT3. Isoforms SCP2 and SCPx cooperate in peroxisomal oxidation of certain naturally occurring tetramethyl-branched fatty acyl-CoAs. The chain is Sterol carrier protein 2 from Homo sapiens (Human).